We begin with the raw amino-acid sequence, 151 residues long: MPKFYCEYCSIYLTHSSPAGRKQHSQGRKHISAKVEYFQRLVREQFFQPPVFLGQTPPIFPGNFRAINHSLGPPMMGVFPGFAPLQTPNIIPQGMMNGIPGGLPGPIPGVPPVPVPMPAIPVIPTELPNMKIDLNQHNAPSVNSTSTTGAQ.

The Matrin-type zinc finger occupies 4–36 (FYCEYCSIYLTHSSPAGRKQHSQGRKHISAKVE).

Belongs to the U1 small nuclear ribonucleoprotein C family. As to quaternary structure, U1 snRNP is composed of the 7 core Sm proteins B/B', D1, D2, D3, E, F and G that assemble in a heptameric protein ring on the Sm site of the small nuclear RNA to form the core snRNP, and at least 3 U1 snRNP-specific proteins U1-70K, U1-A and U1-C. U1-C interacts with U1 snRNA and the 5' splice-site region of the pre-mRNA.

Its subcellular location is the nucleus. Its function is as follows. Component of the spliceosomal U1 snRNP, which is essential for recognition of the pre-mRNA 5' splice-site and the subsequent assembly of the spliceosome. U1-C is directly involved in initial 5' splice-site recognition for both constitutive and regulated alternative splicing. The interaction with the 5' splice-site seems to precede base-pairing between the pre-mRNA and the U1 snRNA. Stimulates commitment or early (E) complex formation by stabilizing the base pairing of the 5' end of the U1 snRNA and the 5' splice-site region. This Theileria annulata protein is U1 small nuclear ribonucleoprotein C.